The sequence spans 437 residues: Putrescine hydroxycinnamoyltransferase 3 (437 aa).

Residues histidine 151 and aspartate 383 each act as proton acceptor in the active site.

It belongs to the plant acyltransferase family. In terms of tissue distribution, highly expressed in roots. Expressed at low levels in shoots and flowers.

Hydroxycinnamoyl transferase that catalyzes the transfer of an acyl from p-coumaryol-CoA to putrescine, to produce coumaroyl putrescine. Can use feruloyl-CoA and caffeoyl-CoA as acyl donors. The sequence is that of Putrescine hydroxycinnamoyltransferase 3 from Oryza sativa subsp. japonica (Rice).